Reading from the N-terminus, the 280-residue chain is Fructose-1,6-bisphosphatase/inositol-1-monophosphatase (280 aa).

The Mg(2+) site is built by Glu73, Asp94, Leu96, and Asp97. Substrate-binding positions include 97–99, Arg195, Val200, and Arg219; that span reads DGT. Residue Asp226 participates in Mg(2+) binding.

This sequence belongs to the inositol monophosphatase superfamily. FBPase class 4 family. The cofactor is Mg(2+).

It carries out the reaction beta-D-fructose 1,6-bisphosphate + H2O = beta-D-fructose 6-phosphate + phosphate. The catalysed reaction is a myo-inositol phosphate + H2O = myo-inositol + phosphate. Its function is as follows. Phosphatase with broad specificity; it can dephosphorylate fructose 1,6-bisphosphate, and both D and L isomers of inositol-1-phosphate (I-1-P). The sequence is that of Fructose-1,6-bisphosphatase/inositol-1-monophosphatase (suhB) from Methanothermobacter thermautotrophicus (strain ATCC 29096 / DSM 1053 / JCM 10044 / NBRC 100330 / Delta H) (Methanobacterium thermoautotrophicum).